A 101-amino-acid polypeptide reads, in one-letter code: Small ribosomal subunit protein uS14 (101 aa).

The protein belongs to the universal ribosomal protein uS14 family. As to quaternary structure, part of the 30S ribosomal subunit. Contacts proteins S3 and S10.

Functionally, binds 16S rRNA, required for the assembly of 30S particles and may also be responsible for determining the conformation of the 16S rRNA at the A site. The chain is Small ribosomal subunit protein uS14 from Nitrosomonas europaea (strain ATCC 19718 / CIP 103999 / KCTC 2705 / NBRC 14298).